A 595-amino-acid polypeptide reads, in one-letter code: Inactive metallocarboxypeptidase ecm14 (595 aa).

The signal sequence occupies residues methionine 1–alanine 22. Positions valine 23–arginine 178 are excised as a propeptide. The Peptidase M14 domain maps to asparagine 206–leucine 527. Positions 270 and 273 each coordinate Zn(2+). Residues histidine 270–glutamate 273, arginine 328, and aspartate 345–arginine 346 each bind substrate. Cysteines 339 and 362 form a disulfide. Residue asparagine 386 is glycosylated (N-linked (GlcNAc...) asparagine). Position 402 (histidine 402) interacts with Zn(2+). Serine 403–tyrosine 404 is a substrate binding site.

It belongs to the peptidase M14 family. Requires Zn(2+) as cofactor.

Its subcellular location is the vacuole. It localises to the secreted. In terms of biological role, inactive carboxypeptidase that may play a role in cell wall organization and biogenesis. The chain is Inactive metallocarboxypeptidase ecm14 (ecm14) from Talaromyces marneffei (strain ATCC 18224 / CBS 334.59 / QM 7333) (Penicillium marneffei).